A 60-amino-acid polypeptide reads, in one-letter code: Large ribosomal subunit protein uL30 (60 aa).

The protein belongs to the universal ribosomal protein uL30 family. Part of the 50S ribosomal subunit.

The chain is Large ribosomal subunit protein uL30 from Acidovorax ebreus (strain TPSY) (Diaphorobacter sp. (strain TPSY)).